Reading from the N-terminus, the 653-residue chain is Sodium-dependent phosphate transporter 2 (653 aa).

Residues 1-5 (MVLDE) lie on the Extracellular side of the membrane. A helical membrane pass occupies residues 6-26 (YMWMVIVGFIIAFVLAFSVGA). At 27 to 46 (NDVANSFGTAVGSGVVTLRQ) the chain is on the cytoplasmic side. A helical membrane pass occupies residues 47 to 67 (ACILASIFETIGSVLLGAKVG). The Extracellular segment spans residues 68–86 (ETIRKGIIDVNLYNNTVDL). Residue asparagine 81 is glycosylated (N-linked (GlcNAc...) asparagine). Residues 87 to 107 (LMAGEVSAMVGSAVWQLIASF) traverse the membrane as a helical segment. The Cytoplasmic portion of the chain corresponds to 108–109 (LK). A helical transmembrane segment spans residues 110 to 130 (LPVSGTHCIVGATIGFSLVAV). Over 131–142 (GAHSVQWMQLVK) the chain is Extracellular. A helical membrane pass occupies residues 143–163 (IVASWFISPLLSGLMSGALFL). Topologically, residues 164 to 187 (MIKFFILNKEDPVPNGLKALPVFY) are cytoplasmic. Residues 188 to 208 (AATIGINVFSILFTGAPLLGL) form a helical membrane-spanning segment. Over 209 to 217 (QTFPVWATA) the chain is Extracellular. A helical membrane pass occupies residues 218 to 238 (LLSVGIAIVFALVVWFFVCPW). At 239-483 (MKKKIASRLK…EDKEEKDKSQ (245 aa)) the chain is on the cytoplasmic side. A disordered region spans residues 275–310 (LPGAKGNDESVLPLTSSSPDAAVSSESVSNGNTRVP). Low complexity predominate over residues 290–303 (SSSPDAAVSSESVS). A helical membrane pass occupies residues 484–504 (VHLLFHFLQILTACFGSFAHG). Residues 505–532 (GNDVSNAIGPLVALWLIYQQGGVMQEAS) are Extracellular-facing. A helical membrane pass occupies residues 533–553 (TPVWLLLYGGVGICAGLWVWG). Residues 554-572 (RRVIQTMGKDLTPITPSSG) are Cytoplasmic-facing. The chain crosses the membrane as a helical span at residues 573 to 587 (FTIELASAFTVVVAS). At 588–594 (NIGLPIS) the chain is on the extracellular side. A helical transmembrane segment spans residues 595–610 (TTHCKVGSVVAVGWIR). Over 611 to 622 (SRKAVDWRLFRN) the chain is Cytoplasmic. The helical transmembrane segment at 623 to 643 (IFLAWFVTVPVAGLFSAGVMA) threads the bilayer. Residues 644–653 (ILQYGILPYV) are Extracellular-facing.

It belongs to the inorganic phosphate transporter (PiT) (TC 2.A.20) family. In terms of assembly, homodimer.

It localises to the cell membrane. The protein resides in the apical cell membrane. It catalyses the reaction 2 Na(+)(out) + phosphate(out) = 2 Na(+)(in) + phosphate(in). Its function is as follows. Sodium-phosphate symporter which preferentially transports the monovalent form of phosphate with a stoichiometry of two sodium ions per phosphate ion. The chain is Sodium-dependent phosphate transporter 2 (slc20a2) from Xenopus laevis (African clawed frog).